A 103-amino-acid polypeptide reads, in one-letter code: Small ribosomal subunit protein cS23 (103 aa).

It belongs to the chloroplast-specific ribosomal protein cS23 family. As to quaternary structure, part of the 30S ribosomal subunit.

It localises to the plastid. It is found in the chloroplast. Probably a ribosomal protein or a ribosome-associated protein. The protein is Small ribosomal subunit protein cS23 (ycf65) of Euglena granulata.